The following is a 430-amino-acid chain: Dihydroorotase (430 aa).

Residues His60 and His62 each contribute to the Zn(2+) site. Substrate-binding positions include 62–64 (HLR) and Asn94. Residues Asp152, His179, His232, and Asp305 each contribute to the Zn(2+) site. The active site involves Asp305. Substrate contacts are provided by residues His309 and 323–324 (FG).

This sequence belongs to the metallo-dependent hydrolases superfamily. DHOase family. Class I DHOase subfamily. Zn(2+) is required as a cofactor.

It catalyses the reaction (S)-dihydroorotate + H2O = N-carbamoyl-L-aspartate + H(+). It functions in the pathway pyrimidine metabolism; UMP biosynthesis via de novo pathway; (S)-dihydroorotate from bicarbonate: step 3/3. Catalyzes the reversible cyclization of carbamoyl aspartate to dihydroorotate. The chain is Dihydroorotase from Solibacter usitatus (strain Ellin6076).